Reading from the N-terminus, the 317-residue chain is DNA repair nuclease/redox regulator APEX1 (317 aa).

A necessary for interaction with YBX1, binding to RNA, association together with NPM1 to rRNA, endoribonuclease activity on abasic RNA and localization in the nucleoli region spans residues 1–32; that stretch reads MPKRGKRAAAEDGEEPKSEPETKKSKGAAKKT. The tract at residues 1 to 57 is disordered; the sequence is MPKRGKRAAAEDGEEPKSEPETKKSKGAAKKTEKEAAGEGPVLYEDPPDQKTSASGK. N6-acetyllysine; by EP300 is present on Lys-6. Positions 8 to 12 match the Nuclear localization signal (NLS) motif; the sequence is AAAED. Basic and acidic residues predominate over residues 15 to 37; it reads EPKSEPETKKSKGAAKKTEKEAA. Phosphoserine is present on Ser-18. The tract at residues 22-32 is necessary for interaction with NPM1 and for efficient rRNA binding; that stretch reads TKKSKGAAKKT. An N6-acetyllysine mark is found at Lys-26, Lys-30, Lys-31, and Lys-34. Ser-53 is subject to Phosphoserine. The Nuclear export signal (NES) signature appears at 63–79; the sequence is ICSWNVDGLRAWIKKKG. Residue Cys-64 is modified to S-nitrosocysteine; alternate. An intrachain disulfide couples Cys-64 to Cys-92. Asp-69 contributes to the Mg(2+) binding site. At Cys-92 the chain carries S-nitrosocysteine; alternate. Residue Glu-95 coordinates Mg(2+). Tyr-170 is a catalytic residue. Lys-196 carries the post-translational modification N6-acetyllysine. Residues Asp-209 and Asn-211 each coordinate Mg(2+). The Proton donor/acceptor role is filled by Asp-209. A Phosphothreonine; by CDK5 modification is found at Thr-232. The mitochondrial targeting sequence (MTS) stretch occupies residues 288 to 317; that stretch reads HSLLPALCDSKIRSKALGSDHCPITLYLAL. Asp-307 provides a ligand contact to Mg(2+). Cys-309 is subject to S-nitrosocysteine.

The protein belongs to the DNA repair enzymes AP/ExoA family. Monomer. Homodimer; disulfide-linked. Component of the SET complex, composed of at least APEX1, SET, ANP32A, HMGB2, NME1 and TREX1. Associates with the dimer XRCC5/XRCC6 in a DNA-dependent manner. Interacts with SIRT1; the interaction is increased in the context of genotoxic stress. Interacts with HDAC1, HDAC2 and HDAC3; the interactions are not dependent on the APEX1 acetylation status. Interacts with XRCC1; the interaction is induced by SIRT1 and increased with the APEX1 acetylated form. Interacts with NPM1 (via N-terminal domain); the interaction is RNA-dependent and decreases in hydrogen peroxide-damaged cells. Interacts (via N-terminus) with YBX1 (via C-terminus); the interaction is increased in presence of APEX1 acetylated. Interacts with HNRNPL; the interaction is DNA-dependent. Interacts (via N-terminus) with KPNA1 and KPNA2. Interacts with TXN; the interaction stimulates the FOS/JUN AP-1 complex DNA-binding activity in a redox-dependent manner. Interacts with GZMA, KRT8, MDM2, POLB, PRDX6, PRPF19, RPLP0, TOMM20 and WDR77. Binds to CDK5. It depends on Mg(2+) as a cofactor. Requires Mn(2+) as cofactor. In terms of processing, phosphorylated. Phosphorylation by kinase PKC or casein kinase CK2 results in enhanced redox activity that stimulates binding of the FOS/JUN AP-1 complex to its cognate binding site. AP-endodeoxyribonuclease activity is not affected by CK2-mediated phosphorylation. Phosphorylation of Thr-232 by CDK5 in response to MPP(+)/MPTP (1-methyl-4-phenylpyridinium) reduces AP-endodeoxyribonuclease activity resulting in accumulation of DNA damage and contributing to neuronal death. Post-translationally, acetylated on Lys-6. Acetylation is increased by the transcriptional coactivator EP300 acetyltransferase, genotoxic agents like H(2)O(2) and methyl methanesulfonate (MMS). Acetylation increases its binding affinity to the negative calcium response element (nCaRE) DNA promoter. The acetylated form induces a stronger binding of YBX1 to the Y-box sequence in the MDR1 promoter than the unacetylated form. Deacetylated on lysines. Lys-6 is deacetylated by SIRT1. Cleaved at Lys-30 by granzyme A to create the mitochondrial form; leading in reduction of binding to DNA, AP endodeoxyribonuclease activity, redox activation of transcription factors and to enhanced cell death. Cleaved by granzyme K; leading to intracellular ROS accumulation and enhanced cell death after oxidative stress. In terms of processing, cys-64 and Cys-92 are nitrosylated in response to nitric oxide (NO) and lead to the exposure of the nuclear export signal (NES). Post-translationally, ubiquitinated by MDM2; leading to translocation to the cytoplasm and proteasomal degradation.

It is found in the nucleus. The protein localises to the nucleolus. The protein resides in the nucleus speckle. Its subcellular location is the endoplasmic reticulum. It localises to the cytoplasm. It is found in the mitochondrion. The enzyme catalyses a deoxyribonucleotide-2'-deoxyribose-5'-monophosphate-DNA + H2O = a 5'-end 2'-deoxyribose-5'-monophosphate-DNA + a 3'-end 2'-deoxyribonucleotide-DNA + H(+). It catalyses the reaction Exonucleolytic cleavage in the 3'- to 5'-direction to yield nucleoside 5'-phosphates.. The catalysed reaction is a 3'-end 2'-deoxyribonucleotide-3'-phosphoglycolate-DNA + H2O = 2-phosphoglycolate + a 3'-end 2'-deoxyribonucleotide-DNA + H(+). It carries out the reaction a 3'-end 2'-deoxyribonucleotide-8-oxoguanine-DNA + H2O = 8-oxo-dGMP + a 3'-end 2'-deoxyribonucleotide-DNA + H(+). Its activity is regulated as follows. NPM1 stimulates endodeoxyribonuclease activity on double-stranded DNA with AP sites, but inhibits endoribonuclease activity on single-stranded RNA containing AP sites. Functionally, multifunctional protein that plays a central role in the cellular response to oxidative stress. The two major activities of APEX1 are DNA repair and redox regulation of transcriptional factors. Functions as an apurinic/apyrimidinic (AP) endodeoxyribonuclease in the base excision repair (BER) pathway of DNA lesions induced by oxidative and alkylating agents. Initiates repair of AP sites in DNA by catalyzing hydrolytic incision of the phosphodiester backbone immediately adjacent to the damage, generating a single-strand break with 5'-deoxyribose phosphate and 3'-hydroxyl ends. Also incises at AP sites in the DNA strand of DNA/RNA hybrids, single-stranded DNA regions of R-loop structures, and single-stranded RNA molecules. Operates at switch sites of immunoglobulin (Ig) constant regions where it mediates Ig isotype class switch recombination. Processes AP sites induced by successive action of AICDA and UNG. Generates staggered nicks in opposite DNA strands resulting in the formation of double-strand DNA breaks that are finally resolved via non-homologous end joining repair pathway. Has 3'-5' exodeoxyribonuclease activity on mismatched deoxyribonucleotides at the 3' termini of nicked or gapped DNA molecules during short-patch BER. Possesses DNA 3' phosphodiesterase activity capable of removing lesions (such as phosphoglycolate and 8-oxoguanine) blocking the 3' side of DNA strand breaks. Also acts as an endoribonuclease involved in the control of single-stranded RNA metabolism. Plays a role in regulating MYC mRNA turnover by preferentially cleaving in between UA and CA dinucleotides of the MYC coding region determinant (CRD). In association with NMD1, plays a role in the rRNA quality control process during cell cycle progression. Acts as a loading factor for POLB onto non-incised AP sites in DNA and stimulates the 5'-terminal deoxyribose 5'-phosphate (dRp) excision activity of POLB. Exerts reversible nuclear redox activity to regulate DNA binding affinity and transcriptional activity of transcriptional factors by controlling the redox status of their DNA-binding domain, such as the FOS/JUN AP-1 complex after exposure to IR. Involved in calcium-dependent down-regulation of parathyroid hormone (PTH) expression by binding to negative calcium response elements (nCaREs). Together with HNRNPL or the dimer XRCC5/XRCC6, associates with nCaRE, acting as an activator of transcriptional repression. May also play a role in the epigenetic regulation of gene expression by participating in DNA demethylation. Stimulates the YBX1-mediated MDR1 promoter activity, when acetylated at Lys-6 and Lys-7, leading to drug resistance. Plays a role in protection from granzyme-mediated cellular repair leading to cell death. Binds DNA and RNA. Associates, together with YBX1, on the MDR1 promoter. Together with NPM1, associates with rRNA. The protein is DNA repair nuclease/redox regulator APEX1 (Apex1) of Rattus norvegicus (Rat).